A 314-amino-acid polypeptide reads, in one-letter code: Atrochrysone carboxyl ACP thioesterase AgnL7 (314 aa).

Zn(2+) is bound by residues His-103, His-105, Asp-107, and His-108. Asp-107 functions as the Proton donor/acceptor in the catalytic mechanism.

This sequence belongs to the metallo-beta-lactamase superfamily. Zn(2+) is required as a cofactor.

It catalyses the reaction atrochrysone carboxyl-[ACP] + H2O = atrochrysone carboxylate + holo-[ACP] + H(+). It functions in the pathway secondary metabolite biosynthesis. Functionally, atrochrysone carboxyl ACP thioesterase; part of the gene cluster that mediates the biosynthesis of agnestins, dihydroxy-xanthone metabolites. The pathway begins with the assembly and cyclization of atrochrysone thioester by the non-reducing polyketide synthase Agnpks1. The atrochrysone carboxyl ACP thioesterase AgnL7 then breaks the thioester bond and releases the atrochrysone carboxylic acid as the first enzyme-free intermediate. The decarboxylase AgnL1 then catalyzes the concerted decarboxylation-elimination required to convert atochrysone carboxylic acid into emodin anthrone, which is further oxidized to emodin by the anthrone oxygenase AgnL2. Emodin then undergoes reduction catalyzed by the oxidoreductase AgnL4 to yield the dihydroquinone tautomer which is the substrate for reduction by the short chain dehydrogenase AgnL6 reduction to produce hydroxyketone, followed by AgnL8 dehydration and likely spontaneous autoxidation to chrysophanol. Baeyer-Villiger oxidation by the oxidase AgnL3 leads to monodictyphenone via cleavage of the C-10/C-10a bond of chrysophanol. Alternative cleavage at the C-4a/C-10 bond of chrysophanol also leads to the formation some cephalone F. Further conversion to agnestins A and B, requires reduction to dihydro-monodictyphenone, oxidation to agnestin C probably via an epoxide, and rearrangement to either agnestin A or agnestin B directly, although agnestin A or agnestin B can also interconvert. Within the cluster, AgnR1 is the only unassigned oxidoreductase present which could be involved in this conversion. However, AgnR1 seems not to be involved in this step, and thus genes involved in the proposed oxidation/reduction may be located elsewhere on the genome. Further agnestin A derivatives are probably formed by spontaneous decarboxylations, dehydrations and methanolysis reactions. The chain is Atrochrysone carboxyl ACP thioesterase AgnL7 from Paecilomyces divaricatus (Penicillium divaricatum).